We begin with the raw amino-acid sequence, 204 residues long: Glycerol-3-phosphate acyltransferase (204 aa).

Transmembrane regions (helical) follow at residues 8–28, 53–73, 81–101, 116–136, and 155–175; these read ILIF…CYIF, VPAA…VVIA, FITA…IFFG, FGFS…VAII, and VIFT…IIIL.

It belongs to the PlsY family. In terms of assembly, probably interacts with PlsX.

The protein resides in the cell inner membrane. The enzyme catalyses an acyl phosphate + sn-glycerol 3-phosphate = a 1-acyl-sn-glycero-3-phosphate + phosphate. It functions in the pathway lipid metabolism; phospholipid metabolism. Catalyzes the transfer of an acyl group from acyl-phosphate (acyl-PO(4)) to glycerol-3-phosphate (G3P) to form lysophosphatidic acid (LPA). This enzyme utilizes acyl-phosphate as fatty acyl donor, but not acyl-CoA or acyl-ACP. The polypeptide is Glycerol-3-phosphate acyltransferase (Francisella tularensis subsp. novicida (strain U112)).